The primary structure comprises 457 residues: Protein N-terminal amidase (457 aa).

One can recognise a CN hydrolase domain in the interval 19 to 453 (LKVLVIQLNP…EGAILREVQF (435 aa)). Catalysis depends on Glu63, which acts as the Proton acceptor. The active-site Proton donor is the Lys136. The Nucleophile role is filled by Cys187.

It belongs to the carbon-nitrogen hydrolase superfamily.

Functionally, deamidates N-terminal Asn and Gln. Component of a targeting complex in the N-end rule pathway. In Saccharomyces cerevisiae (strain ATCC 204508 / S288c) (Baker's yeast), this protein is Protein N-terminal amidase (NTA1).